We begin with the raw amino-acid sequence, 31 residues long: Nemertide alpha-6 (31 aa).

Disulfide bonds link C2–C16, C9–C20, and C15–C26. 2 positions are modified to 4-hydroxyproline: P28 and P29.

This sequence belongs to the nemertide family. As to expression, confined to the epidermis and to the mucus layer.

The protein localises to the secreted. In terms of biological role, highly potent toxin against both insect and some mammalian sodium channels (Nav). It potently inhibits inactivation of insect sodium channels of B.germanica (BgNav1) (EC(50)=2.6 nM) and also delays the inactivation of mammalian Nav with potent activity on Nav1.1/SCN1A (hNav1.1/SCN1A; EC(50)=7.9 nM, rNav1.2/SCN2A; EC(50)=24.3 nM, rNav1.3/SCN3A; EC(50)=105.6 nM, rNav1.4/SCN4A; EC(50)=46.4 nM, hNav1.5/SCN5A; EC(50)=215.2 nM, mNav1.6/SCN8A; EC(50)=36.3 nM, hNav1.9/SCN9A; EC(50)=97.2 nM). 1 uM is enough to completely inhibits the inactivation, resulting in sustained non-inactivating currents. In addition, the toxin significantly enhances the recovery from inactivation, and the open state is not required for the toxin to interact with the channel. In vivo, injection into brine shrimp (Artemia salina) stops movement or causes death after 24 hours (EC(50)=2.8 uM). In Lineus sanguineus (Ribbon worm), this protein is Nemertide alpha-6.